A 327-amino-acid chain; its full sequence is E3 ubiquitin ligase Rnf121 (327 aa).

Transmembrane regions (helical) follow at residues 50–70 (MHAEMVLILIATLVVAQLLLV), 79–96 (SYNMVTLFQMWIVPVYFT), 99–119 (LHWWRFLGIWIVFSIITAYIT), 148–168 (ATGIVGYIAVMFTLFGLNLLF), and 173–193 (EDAMDFGISLLFYGLYYGVLG). An RING-type; atypical zinc finger spans residues 226-276 (CAVCGQQIFVDVNEEGIIENTYRLSCNHVFHEFCIRGWCIVGKKQTCPYCK).

The protein belongs to the RNF121 family.

Its subcellular location is the endoplasmic reticulum membrane. It catalyses the reaction S-ubiquitinyl-[E2 ubiquitin-conjugating enzyme]-L-cysteine + [acceptor protein]-L-lysine = [E2 ubiquitin-conjugating enzyme]-L-cysteine + N(6)-ubiquitinyl-[acceptor protein]-L-lysine.. It functions in the pathway protein modification; protein ubiquitination. Its function is as follows. E3 ubiquitin ligase which accepts ubiquitin and transfers it to substrates thereby promoting their degradation by the endoplasmic reticulum-associated degradation (ERAD) pathway which is a pathway involved in ubiquitin-dependent degradation of misfolded endoplasmic reticulum proteins. May regulate the unfolded protein response to reduce endoplasmic reticulum stress. The chain is E3 ubiquitin ligase Rnf121 (rnf121) from Xenopus laevis (African clawed frog).